Consider the following 313-residue polypeptide: Putative olfactory receptor 2B3 (313 aa).

At 1 to 25 (MNWENESSPKEFILLGFSDRAWLQM) the chain is on the extracellular side. N-linked (GlcNAc...) asparagine glycosylation occurs at Asn5. The helical transmembrane segment at 26–49 (PLFVVLLISYTITIFGNVSIMMVC) threads the bilayer. The Cytoplasmic portion of the chain corresponds to 50 to 57 (ILDPKLHT). A helical membrane pass occupies residues 58 to 79 (PMYFFLTNLSILDLCYTTTTVP). At 80 to 100 (HMLVNIGCNKKTISYAGCVAH) the chain is on the extracellular side. Cysteines 97 and 189 form a disulfide. A helical membrane pass occupies residues 101-120 (LIIFLALGATECLLLAVMSF). The Cytoplasmic portion of the chain corresponds to 121–139 (DRYVAVCRPLHYVVIMNYW). Residues 140–158 (FCLRMAAFSWLIGFGNSVL) form a helical membrane-spanning segment. Residues 159–195 (QSSLTLNMPRCGHQEVDHFFCEVPALLKLSCADTKPI) are Extracellular-facing. A helical transmembrane segment spans residues 196 to 219 (EAELFFFSVLILLIPVTLILISYG). Topologically, residues 220 to 236 (FIAQAVLKIRSAEGRQK) are cytoplasmic. Residues 237-259 (AFGTCGSHMIVVSLFYGTAIYMY) form a helical membrane-spanning segment. The Extracellular portion of the chain corresponds to 260 to 272 (LQPPSSTSKDWGK). The chain crosses the membrane as a helical span at residues 273–292 (MVSLFYGIITSMLNSLIYSL). At 293-313 (RNKDMKEAFKRLMPRIFFCKK) the chain is on the cytoplasmic side.

This sequence belongs to the G-protein coupled receptor 1 family.

Its subcellular location is the cell membrane. In terms of biological role, odorant receptor. The chain is Putative olfactory receptor 2B3 (OR2B3) from Homo sapiens (Human).